The following is a 598-amino-acid chain: Inactive metallocarboxypeptidase ECM14 (598 aa).

An N-terminal signal peptide occupies residues 1–21 (MRLFTHGQVLALLAFVNTISA). The propeptide occupies 22 to 174 (IPSFSTNSYP…QTIYESYPSP (153 aa)). The Peptidase M14 domain maps to 202–522 (NYQPLSVIVP…NAVMMLGRFL (321 aa)). Zn(2+) is bound by residues His264 and Glu267. Residues 264 to 267 (HARE), Arg322, and 339 to 340 (DR) contribute to the substrate site. Cys333 and Cys356 are disulfide-bonded. Residue Asn349 is glycosylated (N-linked (GlcNAc...) asparagine). Residue His396 coordinates Zn(2+). 397–398 (SY) serves as a coordination point for substrate. The disordered stretch occupies residues 539–598 (QRPNKDDKPILNDDDDDDDADTNDDGIGRKDDSWIPDEYKGDNDRDESDGGWAFRRLRKR). The span at 550–562 (NDDDDDDDADTND) shows a compositional bias: acidic residues. Over residues 564–581 (GIGRKDDSWIPDEYKGDN) the composition is skewed to basic and acidic residues.

It belongs to the peptidase M14 family. Requires Zn(2+) as cofactor.

It localises to the vacuole. It is found in the secreted. In terms of biological role, inactive carboxypeptidase that may play a role in cell wall organization and biogenesis. This chain is Inactive metallocarboxypeptidase ECM14 (ECM14), found in Ajellomyces capsulatus (strain H143) (Darling's disease fungus).